Reading from the N-terminus, the 279-residue chain is Large ribosomal subunit protein uL2 (279 aa).

2 disordered regions span residues 32–53 (SLLR…TTRH) and 225–279 (AMNP…KKRK). Positions 253–268 (KEGRTRHINKPSDKLI) are enriched in basic and acidic residues. Residues 269–279 (VRRRNAGKKRK) show a composition bias toward basic residues.

This sequence belongs to the universal ribosomal protein uL2 family. As to quaternary structure, part of the 50S ribosomal subunit. Forms a bridge to the 30S subunit in the 70S ribosome.

Functionally, one of the primary rRNA binding proteins. Required for association of the 30S and 50S subunits to form the 70S ribosome, for tRNA binding and peptide bond formation. It has been suggested to have peptidyltransferase activity; this is somewhat controversial. Makes several contacts with the 16S rRNA in the 70S ribosome. The protein is Large ribosomal subunit protein uL2 of Clavibacter michiganensis subsp. michiganensis (strain NCPPB 382).